A 306-amino-acid chain; its full sequence is Recombination-associated protein RdgC (306 aa).

Belongs to the RdgC family.

It is found in the cytoplasm. Its subcellular location is the nucleoid. Functionally, may be involved in recombination. The polypeptide is Recombination-associated protein RdgC (Pseudomonas putida (strain GB-1)).